The following is a 201-amino-acid chain: 3-isopropylmalate dehydratase small subunit (201 aa).

The protein belongs to the LeuD family. LeuD type 1 subfamily. In terms of assembly, heterodimer of LeuC and LeuD.

It catalyses the reaction (2R,3S)-3-isopropylmalate = (2S)-2-isopropylmalate. It functions in the pathway amino-acid biosynthesis; L-leucine biosynthesis; L-leucine from 3-methyl-2-oxobutanoate: step 2/4. Catalyzes the isomerization between 2-isopropylmalate and 3-isopropylmalate, via the formation of 2-isopropylmaleate. The chain is 3-isopropylmalate dehydratase small subunit from Agrobacterium fabrum (strain C58 / ATCC 33970) (Agrobacterium tumefaciens (strain C58)).